A 176-amino-acid chain; its full sequence is Ribosome maturation factor RimP (176 aa).

Belongs to the RimP family.

It localises to the cytoplasm. Required for maturation of 30S ribosomal subunits. This chain is Ribosome maturation factor RimP, found in Chlorobium limicola (strain DSM 245 / NBRC 103803 / 6330).